A 406-amino-acid chain; its full sequence is Interactor protein for cytohesin exchange factors 1 (406 aa).

The PH domain occupies 13-112; the sequence is HADCQGWLYK…WLNKLGFAVT (100 aa). Disordered regions lie at residues 118–173, 228–285, and 383–406; these read TKDE…FSSL, CRVS…EDDE, and PQDP…ENSL. Residues 123 to 134 are compositionally biased toward acidic residues; the sequence is CYSESEQEDPET. The span at 144–160 shows a compositional bias: low complexity; that stretch reads ASATSSPVAARRASSSS. Polar residues predominate over residues 228–239; that stretch reads CRVSENSSTTPE. Low complexity predominate over residues 243–259; sequence LNSLSSDDTSSLNNSQD. Over residues 272 to 285 the composition is skewed to basic and acidic residues; that stretch reads MTDRDEIKSSEDDE. The tract at residues 285–406 is necessary for interaction with PSCD2 and to translocate to the plasma membrane; it reads EMEKLYKSLE…TSSDCVENSL (122 aa). Residues 392 to 406 are compositionally biased toward polar residues; that stretch reads EIMNPTSSDCVENSL.

As to quaternary structure, interacts with guanine-nucleotide exchange factors PSCD1, PSCD2, PSCD3 and PSCD4. In terms of tissue distribution, expressed in brain, spleen, lung, testis and kidney.

Its subcellular location is the cytoplasm. The protein resides in the cell membrane. Its function is as follows. Enhances the promotion of guanine-nucleotide exchange by PSCD2 on ARF6 in a concentration-dependent manner. The polypeptide is Interactor protein for cytohesin exchange factors 1 (Ipcef1) (Rattus norvegicus (Rat)).